We begin with the raw amino-acid sequence, 306 residues long: Ribosomal protein L11 methyltransferase (306 aa).

Threonine 154, glycine 179, aspartate 201, and asparagine 242 together coordinate S-adenosyl-L-methionine.

It belongs to the methyltransferase superfamily. PrmA family.

It is found in the cytoplasm. It catalyses the reaction L-lysyl-[protein] + 3 S-adenosyl-L-methionine = N(6),N(6),N(6)-trimethyl-L-lysyl-[protein] + 3 S-adenosyl-L-homocysteine + 3 H(+). In terms of biological role, methylates ribosomal protein L11. This Stenotrophomonas maltophilia (strain R551-3) protein is Ribosomal protein L11 methyltransferase.